Consider the following 214-residue polypeptide: Probable nicotinate-nucleotide adenylyltransferase (214 aa).

The protein belongs to the NadD family.

The enzyme catalyses nicotinate beta-D-ribonucleotide + ATP + H(+) = deamido-NAD(+) + diphosphate. It participates in cofactor biosynthesis; NAD(+) biosynthesis; deamido-NAD(+) from nicotinate D-ribonucleotide: step 1/1. In terms of biological role, catalyzes the reversible adenylation of nicotinate mononucleotide (NaMN) to nicotinic acid adenine dinucleotide (NaAD). In Buchnera aphidicola subsp. Acyrthosiphon pisum (strain Tuc7), this protein is Probable nicotinate-nucleotide adenylyltransferase.